The following is a 404-amino-acid chain: Glucose-1-phosphate adenylyltransferase (404 aa).

Alpha-D-glucose 1-phosphate-binding positions include Tyr-99, Gly-164, 179–180 (EK), and Ser-197.

It belongs to the bacterial/plant glucose-1-phosphate adenylyltransferase family. As to quaternary structure, homotetramer.

It catalyses the reaction alpha-D-glucose 1-phosphate + ATP + H(+) = ADP-alpha-D-glucose + diphosphate. It functions in the pathway glycan biosynthesis; glycogen biosynthesis. Functionally, involved in the biosynthesis of ADP-glucose, a building block required for the elongation reactions to produce glycogen. Catalyzes the reaction between ATP and alpha-D-glucose 1-phosphate (G1P) to produce pyrophosphate and ADP-Glc. This is Glucose-1-phosphate adenylyltransferase from Nocardia farcinica (strain IFM 10152).